Here is a 229-residue protein sequence, read N- to C-terminus: uncharacterized protein (229 aa).

Positions 1–26 are cleaved as a signal peptide; that stretch reads MSRNDARYLRCTAALGAAFFACGAAA.

This sequence belongs to the OmpW/AlkL family.

It localises to the cell outer membrane. This is an uncharacterized protein from Sinorhizobium fredii (strain NBRC 101917 / NGR234).